Here is a 226-residue protein sequence, read N- to C-terminus: Phosphoglycolate phosphatase (226 aa).

Catalysis depends on Asp-9, which acts as the Nucleophile. Asp-9 and Asp-11 together coordinate Mg(2+). Position 150 (Lys-150) interacts with substrate. Residues Asp-173 and Asp-177 each coordinate Mg(2+).

Belongs to the archaeal SPP-like hydrolase family. Requires Mg(2+) as cofactor.

The catalysed reaction is 2-phosphoglycolate + H2O = glycolate + phosphate. Catalyzes the dephosphorylation of 2-phosphoglycolate. This chain is Phosphoglycolate phosphatase, found in Methanococcoides burtonii (strain DSM 6242 / NBRC 107633 / OCM 468 / ACE-M).